A 152-amino-acid chain; its full sequence is Ribosome maturation factor RimP (152 aa).

Belongs to the RimP family.

The protein localises to the cytoplasm. Required for maturation of 30S ribosomal subunits. This Pseudothermotoga lettingae (strain ATCC BAA-301 / DSM 14385 / NBRC 107922 / TMO) (Thermotoga lettingae) protein is Ribosome maturation factor RimP.